The primary structure comprises 156 residues: MYGEKAKKVLLHIIRSGGIVAEETLGKDIGMKSNEARKILQQLADEAILRYKTGRVGDKTLHLWILNIDQIEGILIARLKKTREKLLIRLNYEKNNTFLKCPLCGRRYTFDEAFENDFLCPYDGEQLIEYDNSEEIRILEEKIKEITDELSRIGAA.

An HTH TFE/IIEalpha-type domain is found at 1–72; it reads MYGEKAKKVL…LWILNIDQIE (72 aa).

It belongs to the TFE family. Monomer. Interaction with RNA polymerase subunits RpoF and RpoE is necessary for Tfe stimulatory transcription activity. Able to interact with Tbp and RNA polymerase in the absence of DNA promoter. Interacts both with the preinitiation and elongation complexes.

Its function is as follows. Transcription factor that plays a role in the activation of archaeal genes transcribed by RNA polymerase. Facilitates transcription initiation by enhancing TATA-box recognition by TATA-box-binding protein (Tbp), and transcription factor B (Tfb) and RNA polymerase recruitment. Not absolutely required for transcription in vitro, but particularly important in cases where Tbp or Tfb function is not optimal. It dynamically alters the nucleic acid-binding properties of RNA polymerases by stabilizing the initiation complex and destabilizing elongation complexes. Seems to translocate with the RNA polymerase following initiation and acts by binding to the non template strand of the transcription bubble in elongation complexes. The sequence is that of Transcription factor E from Staphylothermus marinus (strain ATCC 43588 / DSM 3639 / JCM 9404 / F1).